The sequence spans 397 residues: MSNSFVLVINSGSSSLKFAVINSVTGEAVLSGLGECFGLEDARMGWKYSGEKTEIAIEGEDNHHKIAIGKLVGLTEELGLTKDIVAVGHRIVHGGEKFTSTVRINEEVTAEIEKLADLAPLHNPAGAIGIRAAMEAFPALPQFAVFDTAFHQTMPKRAFTGAIANELYTDFGIRRYGFHGTSHYFVSREAAKMLNKPIEESSFISVHLGNGASVCAINNGESVDTSMGFTPLSGLMMGTRCGDLDPGIIEYLLKKGWSQEKVFNSLNKASGFLGVSGLTSDARGILEAMEQGHEGATLAFQVFTYRVAKYIASYLAALDSFDGIIFTGGIGENSLPIRREILKNLKLLGFVEDEKGNEDARFGNAGVIATSALLNAVAMVIPTNEEFVIAQQSVELL.

Asparagine 10 serves as a coordination point for Mg(2+). Lysine 17 contributes to the ATP binding site. Position 90 (arginine 90) interacts with substrate. The active-site Proton donor/acceptor is the aspartate 147. Residues 207-211 (HLGNG), 281-283 (DAR), and 329-333 (GIGEN) contribute to the ATP site. Residue glutamate 385 participates in Mg(2+) binding.

The protein belongs to the acetokinase family. Homodimer. Mg(2+) is required as a cofactor. Mn(2+) serves as cofactor.

The protein localises to the cytoplasm. The catalysed reaction is acetate + ATP = acetyl phosphate + ADP. It participates in metabolic intermediate biosynthesis; acetyl-CoA biosynthesis; acetyl-CoA from acetate: step 1/2. Catalyzes the formation of acetyl phosphate from acetate and ATP. Can also catalyze the reverse reaction. The polypeptide is Acetate kinase 2 (Vibrio vulnificus (strain CMCP6)).